Consider the following 219-residue polypeptide: Steroid receptor RNA activator 1 (219 aa).

2 disordered regions span residues 1-90 and 192-219; these read MAEL…SSPV and SLSS…QPSS. Polar residues predominate over residues 23–32; the sequence is YGLQTQTGGT. A Phosphoserine modification is found at S48. A compositionally biased stretch (pro residues) spans 55–76; the sequence is SGPPPVDHPPPSSKASRPPPMG. Residues 192–203 are compositionally biased toward basic and acidic residues; sequence SLSSEENKEEKS. The span at 206 to 219 shows a compositional bias: polar residues; sequence APENQTIPGFQPSS.

The protein belongs to the SRA1 family. SRA1 RNA exists in a ribonucleoprotein complex containing NCOA1. The RNA also forms a complex with PUS1 and RARG in the nucleus. Interacts with AR. As to expression, expressed in various prostate cancer cell lines.

Its subcellular location is the nucleus. The protein resides in the cytoplasm. Its function is as follows. Functional RNA which acts as a transcriptional coactivator that selectively enhances steroid receptor-mediated transactivation ligand-independently through a mechanism involving the modulating N-terminal domain (AF-1) of steroid receptors. Also mediates transcriptional coactivation of steroid receptors ligand-dependently through the steroid-binding domain (AF-2). Enhances cellular proliferation and differentiation and promotes apoptosis in vivo. May play a role in tumorigenesis. The protein is Steroid receptor RNA activator 1 of Rattus norvegicus (Rat).